Consider the following 560-residue polypeptide: MADADIRNDIYVLALENAVKHKAVPRAGAILGSVMGAHPELRSKAKEINALIPEILEEVAALSIEEREEKLMSLNPGAIEKMHEKKERSHELPDLPNAESGVVMRFAPNPSGPLHLGHARASVLNDYYVKKYGGKFYYRVEDTDPKRVDPSAYEMVSEDLAWLGIGITDVVYQSDRFAIYYEYARKLLELGGAYMCTCDNNEFREKKLKKIACPCREISVEENLKRFDDMLAGKYAEGEITLRVKTDIAHPDPAVRDFAAMRVLTSTPHPRKPAIFVYPLMNFSVAVDDHLLGMTHVIRGKDHIANTRRQEYIYNYFGWKMPYFYHYGRMSIAGLELSTSGMRKGINEGLYTGWDDIHLGTLRALARRGIQPEAVRAATIDIGMGDTDISFSWENLFAQNKAVIDAGADRYFFVPDAVEVEIAGAPKTEAHAPVYPNQPERGERVLPFTGRVLLPKSEMEKGGMLRLKDLFNINITGPNSAEYAGDSLAEARSQKAAIVQWLPTETAAPCSLLTPEGIQEGFSEPAVLGYLGRIVQFERVGFSKIDAVNDGKVIAYFTHR.

Residues 108 to 118 (PNPSGPLHLGH) carry the 'HIGH' region motif.

It belongs to the class-I aminoacyl-tRNA synthetase family. Glutamate--tRNA ligase type 2 subfamily.

It is found in the cytoplasm. The enzyme catalyses tRNA(Glu) + L-glutamate + ATP = L-glutamyl-tRNA(Glu) + AMP + diphosphate. In terms of biological role, catalyzes the attachment of glutamate to tRNA(Glu) in a two-step reaction: glutamate is first activated by ATP to form Glu-AMP and then transferred to the acceptor end of tRNA(Glu). In Methanocorpusculum labreanum (strain ATCC 43576 / DSM 4855 / Z), this protein is Glutamate--tRNA ligase.